A 220-amino-acid chain; its full sequence is Ribonuclease HII (220 aa).

The RNase H type-2 domain maps to 1–219 (MMIAGIDEAG…VENIREELKK (219 aa)). A divalent metal cation-binding residues include Asp-7, Glu-8, and Asp-105.

Belongs to the RNase HII family. Requires Mn(2+) as cofactor. The cofactor is Mg(2+).

Its subcellular location is the cytoplasm. The catalysed reaction is Endonucleolytic cleavage to 5'-phosphomonoester.. In terms of biological role, endonuclease that specifically degrades the RNA of RNA-DNA hybrids. In Methanosarcina mazei (strain ATCC BAA-159 / DSM 3647 / Goe1 / Go1 / JCM 11833 / OCM 88) (Methanosarcina frisia), this protein is Ribonuclease HII.